Reading from the N-terminus, the 327-residue chain is Probable protein phosphatase 2C 59 (327 aa).

The signal sequence occupies residues Met1–Cys24. One can recognise a PPM-type phosphatase domain in the interval Ser64–Phe310. Residues Asp100, Gly101, Asp262, and Asp301 each coordinate Mn(2+).

This sequence belongs to the PP2C family. Mg(2+) serves as cofactor. It depends on Mn(2+) as a cofactor.

It carries out the reaction O-phospho-L-seryl-[protein] + H2O = L-seryl-[protein] + phosphate. The catalysed reaction is O-phospho-L-threonyl-[protein] + H2O = L-threonyl-[protein] + phosphate. This is Probable protein phosphatase 2C 59 from Oryza sativa subsp. japonica (Rice).